The chain runs to 164 residues: Cold-inducible RNA-binding protein (164 aa).

The RRM domain occupies 6–84 (GKLFVGGLSF…RQIRVDQAGK (79 aa)). The segment at 65–164 (AGMNGKTVDG…SYRDSYDSYG (100 aa)) is disordered. The span at 93–118 (YRGGSSGGGRGFFRGGRGRGGGGYGG) shows a compositional bias: gly residues. A compositionally biased stretch (basic and acidic residues) spans 155-164 (SYRDSYDSYG).

Interacts with prmt1. Interacts with elavl1/elrA (via RRM3). Associates with ribosomes. Post-translationally, methylated on arginine residues within RGG motifs. Methylation by prmt1 promotes cytoplasmic accumulation.

It is found in the nucleus. Its subcellular location is the nucleoplasm. The protein localises to the cytoplasm. Functionally, cold-inducible mRNA binding protein. Acts cooperatively with elavl1/elrA to stabilize AU-rich element (ARE)-containing mRNAs by binding to them and inhibiting their deadenylation. Essential for embryonic gastrulation and neural development, acting to maintain the expression of a set of adhesion molecules, and cell movement during embryogenesis. Required for pronephros development. May play a role in hibernation. This chain is Cold-inducible RNA-binding protein, found in Aquarana catesbeiana (American bullfrog).